A 103-amino-acid polypeptide reads, in one-letter code: Iron-sulfur cluster assembly protein CyaY (103 aa).

The protein belongs to the frataxin family.

Involved in iron-sulfur (Fe-S) cluster assembly. May act as a regulator of Fe-S biogenesis. In Rickettsia peacockii (strain Rustic), this protein is Iron-sulfur cluster assembly protein CyaY.